Consider the following 815-residue polypeptide: Leucine--tRNA ligase (815 aa).

Positions Pro-40–His-50 match the 'HIGH' region motif. The 'KMSKS' region motif lies at Lys-583 to Ser-587. Lys-586 is a binding site for ATP.

This sequence belongs to the class-I aminoacyl-tRNA synthetase family.

It is found in the cytoplasm. The catalysed reaction is tRNA(Leu) + L-leucine + ATP = L-leucyl-tRNA(Leu) + AMP + diphosphate. The chain is Leucine--tRNA ligase from Nitratiruptor sp. (strain SB155-2).